Here is a 297-residue protein sequence, read N- to C-terminus: MRIAVIGAGKWGSALHLALKENHNCFISSLHQRDLEDFVSIKEALECEYLIFALSSQGMRVWLKENFINKGQKILIASKGIEDQSCQFLDEIFLDFVPKENFCVLSGPSFAAEVMQKLPTALMISGINQELCKKFASFFPDFIKTYIDNDVRGAEICGAYKNVLAIASGISDGLKLGNNARAALISRGLIEMHRFGKFFGTKEETFLGLSGAGDLFLTATSVLSRNYRVGLKLAQNQKLDSILAELNEVAEGVKTAYAIEKLAKMKGIYTPIVNEVVAIFKGKSVQEATQNLLKQND.

The NADPH site is built by tryptophan 11, arginine 33, and lysine 79. Residues lysine 79, glycine 107, and serine 109 each coordinate sn-glycerol 3-phosphate. NADPH is bound at residue alanine 111. Lysine 161, aspartate 214, serine 224, arginine 225, and asparagine 226 together coordinate sn-glycerol 3-phosphate. The active-site Proton acceptor is lysine 161. Position 225 (arginine 225) interacts with NADPH. Positions 249 and 251 each coordinate NADPH.

Belongs to the NAD-dependent glycerol-3-phosphate dehydrogenase family.

The protein resides in the cytoplasm. It carries out the reaction sn-glycerol 3-phosphate + NAD(+) = dihydroxyacetone phosphate + NADH + H(+). The catalysed reaction is sn-glycerol 3-phosphate + NADP(+) = dihydroxyacetone phosphate + NADPH + H(+). Its pathway is membrane lipid metabolism; glycerophospholipid metabolism. Catalyzes the reduction of the glycolytic intermediate dihydroxyacetone phosphate (DHAP) to sn-glycerol 3-phosphate (G3P), the key precursor for phospholipid synthesis. The sequence is that of Glycerol-3-phosphate dehydrogenase [NAD(P)+] from Campylobacter jejuni subsp. jejuni serotype O:23/36 (strain 81-176).